The sequence spans 189 residues: ATP-dependent protease subunit HslV (189 aa).

The active site involves Thr12. Residues Ser172, Cys175, and Thr178 each coordinate Na(+).

This sequence belongs to the peptidase T1B family. HslV subfamily. In terms of assembly, a double ring-shaped homohexamer of HslV is capped on each side by a ring-shaped HslU homohexamer. The assembly of the HslU/HslV complex is dependent on binding of ATP.

The protein localises to the cytoplasm. It catalyses the reaction ATP-dependent cleavage of peptide bonds with broad specificity.. Allosterically activated by HslU binding. Functionally, protease subunit of a proteasome-like degradation complex believed to be a general protein degrading machinery. The polypeptide is ATP-dependent protease subunit HslV (Ehrlichia chaffeensis (strain ATCC CRL-10679 / Arkansas)).